A 282-amino-acid chain; its full sequence is Pantothenate synthetase (282 aa).

30–37 (MGALHAGH) is an ATP binding site. Catalysis depends on His-37, which acts as the Proton donor. Gln-61 contacts (R)-pantoate. Residue Gln-61 coordinates beta-alanine. Residue 147–150 (GEKD) coordinates ATP. Residue Gln-153 participates in (R)-pantoate binding. Residues Val-177 and 185-188 (LSSR) contribute to the ATP site.

The protein belongs to the pantothenate synthetase family. As to quaternary structure, homodimer.

It localises to the cytoplasm. It catalyses the reaction (R)-pantoate + beta-alanine + ATP = (R)-pantothenate + AMP + diphosphate + H(+). Its pathway is cofactor biosynthesis; (R)-pantothenate biosynthesis; (R)-pantothenate from (R)-pantoate and beta-alanine: step 1/1. Functionally, catalyzes the condensation of pantoate with beta-alanine in an ATP-dependent reaction via a pantoyl-adenylate intermediate. The sequence is that of Pantothenate synthetase from Phocaeicola vulgatus (strain ATCC 8482 / DSM 1447 / JCM 5826 / CCUG 4940 / NBRC 14291 / NCTC 11154) (Bacteroides vulgatus).